Here is a 468-residue protein sequence, read N- to C-terminus: UDP-N-acetylmuramate--L-alanine ligase (468 aa).

117–123 is an ATP binding site; sequence GTHGKTT.

It belongs to the MurCDEF family.

The protein resides in the cytoplasm. It carries out the reaction UDP-N-acetyl-alpha-D-muramate + L-alanine + ATP = UDP-N-acetyl-alpha-D-muramoyl-L-alanine + ADP + phosphate + H(+). It functions in the pathway cell wall biogenesis; peptidoglycan biosynthesis. Cell wall formation. The protein is UDP-N-acetylmuramate--L-alanine ligase of Maricaulis maris (strain MCS10) (Caulobacter maris).